The following is a 534-amino-acid chain: Cytochrome c oxidase subunit 1 (534 aa).

Residues 1–14 lie on the Mitochondrial matrix side of the membrane; sequence MVQRWLYSTNAKDI. The helical transmembrane segment at 15–39 threads the bilayer; it reads AVLYFMLAIFSGMAGTAMSLIIRLE. Positions 39, 42, and 44 each coordinate Ca(2+). At 40–54 the chain is on the mitochondrial intermembrane side; sequence LAAPGSQYLHGNSQL. Residues 55–88 form a helical membrane-spanning segment; that stretch reads FNVLVVGHAVLMIFFLVMPALIGGFGNYLLPLMI. A Fe(II)-heme a-binding site is contributed by His62. At 89-97 the chain is on the mitochondrial matrix side; the sequence is GATDTAFPR. Residues 98–118 form a helical membrane-spanning segment; it reads INNIAFWVLPMGLVCLVTSTL. Residues 119–142 are Mitochondrial intermembrane-facing; it reads VESGAGTGWTVYPPLSSIQAHSGP. The helical transmembrane segment at 143–171 threads the bilayer; sequence SVDLAIFALHLTSISSLLGAINFIVTTLN. The Mitochondrial matrix portion of the chain corresponds to 172–183; the sequence is MRTNGMTMHKLP. Residues 184–215 form a helical membrane-spanning segment; that stretch reads LFVWSIFITAFLLLLSLPVLSAGITMLLLDRN. Residues 216-228 lie on the Mitochondrial intermembrane side of the membrane; sequence FNTSFFEVSGGGD. Residues 229–263 traverse the membrane as a helical segment; it reads PILYEHLFWFFGHPEVYILIIPGFGIISHVVSTYS. His241 contributes to the Cu cation binding site. Positions 241–245 form a cross-link, 1'-histidyl-3'-tyrosine (His-Tyr); the sequence is HPEVY. Tyr245 contributes to the O2 binding site. Residues 264 to 269 are Mitochondrial matrix-facing; the sequence is KKPVFG. The chain crosses the membrane as a helical span at residues 270 to 295; sequence EISMVYAMASIGLLGFLVWSHHMYIV. Positions 290 and 291 each coordinate Cu cation. Topologically, residues 296 to 298 are mitochondrial intermembrane; it reads GLD. Residues 299 to 327 traverse the membrane as a helical segment; sequence ADTRAYFTSATMIIAIPTGIKIFSWLATI. At 328 to 335 the chain is on the mitochondrial matrix side; it reads HGGSIRLA. The helical transmembrane segment at 336–358 threads the bilayer; that stretch reads TPMLYAIAFLFLFTMGGLTGVAL. The Mitochondrial intermembrane portion of the chain corresponds to 359–370; that stretch reads ANASLDVAFHDT. Mg(2+)-binding residues include His368 and Asp369. Residues 371–400 form a helical membrane-spanning segment; that stretch reads YYVVGHFHYVLSMGAIFSLFAGYYYWSPQI. Residue His376 participates in heme a3 binding. His378 is a binding site for Fe(II)-heme a. Over 401–406 the chain is Mitochondrial matrix; the sequence is LGLNYN. A helical membrane pass occupies residues 407–431; it reads EKLAQIQFWLIFIGANVIFFPMHFL. At 432–449 the chain is on the mitochondrial intermembrane side; the sequence is GINGMPRRIPDYPDAFAG. Pro441 is a Ca(2+) binding site. The helical transmembrane segment at 450–474 threads the bilayer; it reads WNYVASIGSFIATLSLFLFIYILYD. The Mitochondrial matrix segment spans residues 475 to 534; it reads QLVNGLNNKVNNKSVIYNKAPDFVESNTIFNLNTVKSSSIEFLLTSPPAVHSFNTPAVQS.

It belongs to the heme-copper respiratory oxidase family. As to quaternary structure, component of the cytochrome c oxidase (complex IV, CIV), a multisubunit enzyme composed of 12 subunits. The complex is composed of a catalytic core of 3 subunits COX1, COX2 and COX3, encoded in the mitochondrial DNA, and 9 supernumerary subunits COX4, COX5A (or COX5B), COX6, COX7, COX8, COX9, COX12, COX13 and COX26, which are encoded in the nuclear genome. The complex exists as a monomer or a dimer and forms supercomplexes (SCs) in the inner mitochondrial membrane with a dimer of ubiquinol-cytochrome c oxidoreductase (cytochrome b-c1 complex, complex III, CIII), resulting in 2 different assemblies (supercomplexes III(2)IV and III(2)IV(2)). The cofactor is heme. Cu cation serves as cofactor. The N-terminus is blocked.

It is found in the mitochondrion inner membrane. The enzyme catalyses 4 Fe(II)-[cytochrome c] + O2 + 8 H(+)(in) = 4 Fe(III)-[cytochrome c] + 2 H2O + 4 H(+)(out). It functions in the pathway energy metabolism; oxidative phosphorylation. Its function is as follows. Component of the cytochrome c oxidase, the last enzyme in the mitochondrial electron transport chain which drives oxidative phosphorylation. The respiratory chain contains 3 multisubunit complexes succinate dehydrogenase (complex II, CII), ubiquinol-cytochrome c oxidoreductase (cytochrome b-c1 complex, complex III, CIII) and cytochrome c oxidase (complex IV, CIV), that cooperate to transfer electrons derived from NADH and succinate to molecular oxygen, creating an electrochemical gradient over the inner membrane that drives transmembrane transport and the ATP synthase. Cytochrome c oxidase is the component of the respiratory chain that catalyzes the reduction of oxygen to water. Electrons originating from reduced cytochrome c in the intermembrane space (IMS) are transferred via the dinuclear copper A center (CU(A)) of COX2 and heme A of COX1 to the active site in COX1, a binuclear center (BNC) formed by heme A3 and copper B (CU(B)). The BNC reduces molecular oxygen to 2 water molecules using 4 electrons from cytochrome c in the IMS and 4 protons from the mitochondrial matrix. COX1 is a catalytic core subunit containing heme A and the active site BNC with heme A3 and the copper atom CU(B). The sequence is that of Cytochrome c oxidase subunit 1 (COX1) from Saccharomyces cerevisiae (strain ATCC 204508 / S288c) (Baker's yeast).